Consider the following 192-residue polypeptide: Peptidyl-tRNA hydrolase (192 aa).

Histidine 17 is a tRNA binding site. The Proton acceptor role is filled by histidine 22. TRNA contacts are provided by phenylalanine 68, asparagine 70, and asparagine 116.

Belongs to the PTH family. Monomer.

It localises to the cytoplasm. The catalysed reaction is an N-acyl-L-alpha-aminoacyl-tRNA + H2O = an N-acyl-L-amino acid + a tRNA + H(+). Hydrolyzes ribosome-free peptidyl-tRNAs (with 1 or more amino acids incorporated), which drop off the ribosome during protein synthesis, or as a result of ribosome stalling. Its function is as follows. Catalyzes the release of premature peptidyl moieties from peptidyl-tRNA molecules trapped in stalled 50S ribosomal subunits, and thus maintains levels of free tRNAs and 50S ribosomes. This is Peptidyl-tRNA hydrolase from Stenotrophomonas maltophilia (strain R551-3).